The following is a 64-amino-acid chain: RKCFNSPGRLVSKPCPEGNNLCYKMSNRMYPPGFNVRRGCAETCPRRNRLLEVVCCCDTDNCNK.

4 cysteine pairs are disulfide-bonded: cysteine 3–cysteine 22, cysteine 15–cysteine 40, cysteine 44–cysteine 56, and cysteine 57–cysteine 62.

The protein belongs to the three-finger toxin family. Short-chain subfamily. Orphan group XIII sub-subfamily. In terms of tissue distribution, expressed by the venom gland.

Its subcellular location is the secreted. The polypeptide is Cytotoxin homolog S4C8 (Aspidelaps scutatus (Shield-nose snake)).